The sequence spans 801 residues: Phenylalanine--tRNA ligase beta subunit (801 aa).

In terms of domain architecture, tRNA-binding spans 39 to 154; that stretch reads LKMPQKVVVG…GHLELGVELG (116 aa). In terms of domain architecture, B5 spans 398 to 475; it reads IDEITIKTTF…RIYGIDNVSS (78 aa). Residues aspartate 453, aspartate 459, glutamate 462, and glutamate 463 each contribute to the Mg(2+) site. In terms of domain architecture, FDX-ACB spans 708–800; sequence SKYQKSTRDL…LVREFDAVLR (93 aa).

This sequence belongs to the phenylalanyl-tRNA synthetase beta subunit family. Type 1 subfamily. Tetramer of two alpha and two beta subunits. The cofactor is Mg(2+).

It localises to the cytoplasm. The catalysed reaction is tRNA(Phe) + L-phenylalanine + ATP = L-phenylalanyl-tRNA(Phe) + AMP + diphosphate + H(+). This Helicobacter hepaticus (strain ATCC 51449 / 3B1) protein is Phenylalanine--tRNA ligase beta subunit.